A 142-amino-acid polypeptide reads, in one-letter code: Putative pre-16S rRNA nuclease (142 aa).

The protein belongs to the YqgF nuclease family.

The protein resides in the cytoplasm. Functionally, could be a nuclease involved in processing of the 5'-end of pre-16S rRNA. The chain is Putative pre-16S rRNA nuclease from Staphylococcus aureus (strain bovine RF122 / ET3-1).